Consider the following 325-residue polypeptide: DNA repair and recombination protein RadA (325 aa).

107–114 is an ATP binding site; it reads GEFGSGKT.

It belongs to the eukaryotic RecA-like protein family.

Involved in DNA repair and in homologous recombination. Binds and assemble on single-stranded DNA to form a nucleoprotein filament. Hydrolyzes ATP in a ssDNA-dependent manner and promotes DNA strand exchange between homologous DNA molecules. This Methanosarcina acetivorans (strain ATCC 35395 / DSM 2834 / JCM 12185 / C2A) protein is DNA repair and recombination protein RadA.